Reading from the N-terminus, the 201-residue chain is Adenylyl-sulfate kinase (201 aa).

35 to 42 provides a ligand contact to ATP; the sequence is GLSGSGKS. Ser-109 acts as the Phosphoserine intermediate in catalysis.

Belongs to the APS kinase family.

The enzyme catalyses adenosine 5'-phosphosulfate + ATP = 3'-phosphoadenylyl sulfate + ADP + H(+). The protein operates within sulfur metabolism; hydrogen sulfide biosynthesis; sulfite from sulfate: step 2/3. Its function is as follows. Catalyzes the synthesis of activated sulfate. In Escherichia coli O139:H28 (strain E24377A / ETEC), this protein is Adenylyl-sulfate kinase.